Consider the following 464-residue polypeptide: E3 ubiquitin-protein ligase MYLIP-B (464 aa).

The FERM domain occupies 1–279 (MLCHITRPDS…EIHAFYRCDT (279 aa)). The RING-type zinc-finger motif lies at 381–416 (CALCCEQEISAAFCPCGHMFCCYNCASQLQCCPVCR).

As to quaternary structure, interacts with anxa5.

The protein resides in the cytoplasm. It is found in the cytosol. It carries out the reaction S-ubiquitinyl-[E2 ubiquitin-conjugating enzyme]-L-cysteine + [acceptor protein]-L-lysine = [E2 ubiquitin-conjugating enzyme]-L-cysteine + N(6)-ubiquitinyl-[acceptor protein]-L-lysine.. Its pathway is protein modification; protein ubiquitination. Its function is as follows. E3 ubiquitin-protein ligase that mediates ubiquitination and subsequent proteasomal degradation of myosin regulatory light chain (MRLC). Regulates cell movements during gastrulation by acting downstream of fz7 to antagonize the frizzled-signaling pathway. The chain is E3 ubiquitin-protein ligase MYLIP-B from Danio rerio (Zebrafish).